The following is a 257-amino-acid chain: NAD-capped RNA hydrolase NudC (257 aa).

Substrate-binding residues include Lys25 and Arg69. Zn(2+)-binding residues include Cys98 and Cys101. Glu111 provides a ligand contact to substrate. Zn(2+)-binding residues include Cys116 and Cys119. Residue Tyr124 participates in substrate binding. A Nudix hydrolase domain is found at 125-248; sequence PQIAPCIIVA…TVARRLIEDT (124 aa). A divalent metal cation is bound by residues Ala158, Glu174, and Glu178. The short motif at 159 to 180 is the Nudix box element; sequence GFVEVGETLEQAVAREVMEESG. 192–199 serves as a coordination point for substrate; sequence QPWPFPQS. Glu219 contacts a divalent metal cation. Ala241 provides a ligand contact to substrate.

It belongs to the Nudix hydrolase family. NudC subfamily. Homodimer. Requires Mg(2+) as cofactor. The cofactor is Mn(2+). Zn(2+) is required as a cofactor.

It catalyses the reaction a 5'-end NAD(+)-phospho-ribonucleoside in mRNA + H2O = a 5'-end phospho-adenosine-phospho-ribonucleoside in mRNA + beta-nicotinamide D-ribonucleotide + 2 H(+). The enzyme catalyses NAD(+) + H2O = beta-nicotinamide D-ribonucleotide + AMP + 2 H(+). It carries out the reaction NADH + H2O = reduced beta-nicotinamide D-ribonucleotide + AMP + 2 H(+). In terms of biological role, mRNA decapping enzyme that specifically removes the nicotinamide adenine dinucleotide (NAD) cap from a subset of mRNAs by hydrolyzing the diphosphate linkage to produce nicotinamide mononucleotide (NMN) and 5' monophosphate mRNA. The NAD-cap is present at the 5'-end of some mRNAs and stabilizes RNA against 5'-processing. Has preference for mRNAs with a 5'-end purine. Catalyzes the hydrolysis of a broad range of dinucleotide pyrophosphates. In Shigella flexneri serotype 5b (strain 8401), this protein is NAD-capped RNA hydrolase NudC.